A 110-amino-acid polypeptide reads, in one-letter code: Vacuolar ATPase assembly integral membrane protein VMA21 (110 aa).

Residues 1-28 form a disordered region; that stretch reads MTTRRIIGQDGEEKTYLDVDPRGPPGPS. The Cytoplasmic segment spans residues 1–44; that stretch reads MTTRRIIGQDGEEKTYLDVDPRGPPGPSNISPAVPASVIWKLMS. A compositionally biased stretch (basic and acidic residues) spans 11–21; sequence GEEKTYLDVDP. Residues 45 to 65 form a helical membrane-spanning segment; that stretch reads FTFAMITLPIGTYFFTVNYVF. The Lumenal segment spans residues 66–71; that stretch reads GGNATY. Residues 72 to 92 traverse the membrane as a helical segment; sequence AGALAAIMANVVLIAYVIMAF. Over 93 to 110 the chain is Cytoplasmic; that stretch reads KDDQAEQAEDAREAKKEL. The Prevents secretion from ER signature appears at 107–110; sequence KKEL.

Belongs to the VMA21 family.

It localises to the endoplasmic reticulum membrane. It is found in the endoplasmic reticulum-Golgi intermediate compartment membrane. The protein localises to the cytoplasmic vesicle. Its subcellular location is the COPII-coated vesicle membrane. Required for the assembly of the V0 complex of the vacuolar ATPase (V-ATPase) in the endoplasmic reticulum. The sequence is that of Vacuolar ATPase assembly integral membrane protein VMA21 from Phaeosphaeria nodorum (strain SN15 / ATCC MYA-4574 / FGSC 10173) (Glume blotch fungus).